We begin with the raw amino-acid sequence, 129 residues long: Small ribosomal subunit protein uS9 (129 aa).

Positions 104–113 are enriched in basic and acidic residues; that stretch reads TRDSRVVERK. Residues 104-129 form a disordered region; it reads TRDSRVVERKKPGKRKARRSRQFSKR. Over residues 114 to 129 the composition is skewed to basic residues; that stretch reads KPGKRKARRSRQFSKR.

The protein belongs to the universal ribosomal protein uS9 family.

This is Small ribosomal subunit protein uS9 from Sulfurimonas denitrificans (strain ATCC 33889 / DSM 1251) (Thiomicrospira denitrificans (strain ATCC 33889 / DSM 1251)).